A 172-amino-acid chain; its full sequence is Adenine phosphoribosyltransferase (172 aa).

It belongs to the purine/pyrimidine phosphoribosyltransferase family. In terms of assembly, homodimer.

It localises to the cytoplasm. It carries out the reaction AMP + diphosphate = 5-phospho-alpha-D-ribose 1-diphosphate + adenine. Its pathway is purine metabolism; AMP biosynthesis via salvage pathway; AMP from adenine: step 1/1. Its function is as follows. Catalyzes a salvage reaction resulting in the formation of AMP, that is energically less costly than de novo synthesis. This is Adenine phosphoribosyltransferase from Levilactobacillus brevis (strain ATCC 367 / BCRC 12310 / CIP 105137 / JCM 1170 / LMG 11437 / NCIMB 947 / NCTC 947) (Lactobacillus brevis).